Consider the following 237-residue polypeptide: ATP synthase subunit a (237 aa).

The next 6 helical transmembrane spans lie at 18–38 (STLW…VGTL), 77–97 (IFTL…PMAF), 103–123 (IAVT…LGFM), 132–152 (LFWV…IEVI), 185–205 (LILF…AIVA), and 209–229 (LEIL…CVYL).

This sequence belongs to the ATPase A chain family. In terms of assembly, F-type ATPases have 2 components, CF(1) - the catalytic core - and CF(0) - the membrane proton channel. CF(1) has five subunits: alpha(3), beta(3), gamma(1), delta(1), epsilon(1). CF(0) has three main subunits: a(1), b(2) and c(9-12). The alpha and beta chains form an alternating ring which encloses part of the gamma chain. CF(1) is attached to CF(0) by a central stalk formed by the gamma and epsilon chains, while a peripheral stalk is formed by the delta and b chains.

The protein resides in the cellular chromatophore membrane. Its function is as follows. Key component of the proton channel; it plays a direct role in the translocation of protons across the membrane. This chain is ATP synthase subunit a, found in Rhodobacter capsulatus (Rhodopseudomonas capsulata).